A 261-amino-acid polypeptide reads, in one-letter code: uncharacterized protein (261 aa).

The signal sequence occupies residues 1–22 (MIHSKKLTLGICLVLLIILIGG). A lipid anchor (N-palmitoyl cysteine) is attached at Cys23. A lipid anchor (S-diacylglycerol cysteine) is attached at Cys23.

This sequence belongs to the staphylococcal tandem lipoprotein family.

Its subcellular location is the cell membrane. This is an uncharacterized protein from Staphylococcus aureus (strain USA300).